Consider the following 88-residue polypeptide: RNA-binding protein Hfq (88 aa).

In terms of domain architecture, Sm spans 9–68 (DPFLNALRRERIPVSIYLVNGIKLQGQIESFDQFVILLKNTVNQMVYKHAISTVVPARAV). Positions 66–88 (RAVSHHSGEQQRAPSDRPEKTED) are disordered. Residues 71-88 (HSGEQQRAPSDRPEKTED) are compositionally biased toward basic and acidic residues.

The protein belongs to the Hfq family. Homohexamer.

Functionally, RNA chaperone that binds small regulatory RNA (sRNAs) and mRNAs to facilitate mRNA translational regulation in response to envelope stress, environmental stress and changes in metabolite concentrations. Also binds with high specificity to tRNAs. The sequence is that of RNA-binding protein Hfq from Vibrio atlanticus (strain LGP32) (Vibrio splendidus (strain Mel32)).